A 310-amino-acid chain; its full sequence is Homeobox protein dsc-1 (310 aa).

The segment at residues 180–239 is a DNA-binding region (homeobox); it reads RRRFRTNFTELQSTFLEDSFKESHYPDHKAKKYMADFLKIPEDRITVWFQNRRAKWRRKE. The disordered stretch occupies residues 262–310; the sequence is CFSAQHPDDGPNAKHPNSFGIPNQPMSLDQFPMNTEQDFPEFPSLQEHQ. The span at 281-298 shows a compositional bias: polar residues; that stretch reads GIPNQPMSLDQFPMNTEQ.

Expressed in the bilateral sensory neurons AWA, AWB, AWC, ASE, FLP and PVD. Also expressed in the enteric intestinal and anal depressor muscles.

The protein resides in the nucleus. The protein localises to the cell projection. It localises to the axon. It is found in the cytoplasm. Its function is as follows. Transcriptional regulator which plays a role in the expulsion step of defecation by controlling enteric muscle-specific expression of exp-1 which is required for enteric muscle contraction. Not required for exp-1 expression in the PDA neuron. Also involved in controlling the length of the defecation cycle. This Caenorhabditis elegans protein is Homeobox protein dsc-1.